A 578-amino-acid polypeptide reads, in one-letter code: Proline--tRNA ligase (578 aa).

Belongs to the class-II aminoacyl-tRNA synthetase family. ProS type 1 subfamily. In terms of assembly, homodimer.

Its subcellular location is the cytoplasm. The enzyme catalyses tRNA(Pro) + L-proline + ATP = L-prolyl-tRNA(Pro) + AMP + diphosphate. Its function is as follows. Catalyzes the attachment of proline to tRNA(Pro) in a two-step reaction: proline is first activated by ATP to form Pro-AMP and then transferred to the acceptor end of tRNA(Pro). As ProRS can inadvertently accommodate and process non-cognate amino acids such as alanine and cysteine, to avoid such errors it has two additional distinct editing activities against alanine. One activity is designated as 'pretransfer' editing and involves the tRNA(Pro)-independent hydrolysis of activated Ala-AMP. The other activity is designated 'posttransfer' editing and involves deacylation of mischarged Ala-tRNA(Pro). The misacylated Cys-tRNA(Pro) is not edited by ProRS. This chain is Proline--tRNA ligase, found in Burkholderia ambifaria (strain MC40-6).